A 180-amino-acid polypeptide reads, in one-letter code: Acireductone dioxygenase 1 (180 aa).

Positions 82, 84, 88, and 127 each coordinate Fe(2+). 4 residues coordinate Ni(2+): H82, H84, E88, and H127.

Belongs to the acireductone dioxygenase (ARD) family. Fe(2+) serves as cofactor. The cofactor is Ni(2+).

It localises to the cytoplasm. The protein localises to the nucleus. The enzyme catalyses 1,2-dihydroxy-5-(methylsulfanyl)pent-1-en-3-one + O2 = 4-methylsulfanyl-2-oxobutanoate + formate + 2 H(+). The catalysed reaction is 1,2-dihydroxy-5-(methylsulfanyl)pent-1-en-3-one + O2 = 3-(methylsulfanyl)propanoate + CO + formate + 2 H(+). It participates in amino-acid biosynthesis; L-methionine biosynthesis via salvage pathway; L-methionine from S-methyl-5-thio-alpha-D-ribose 1-phosphate: step 5/6. In terms of biological role, catalyzes 2 different reactions between oxygen and the acireductone 1,2-dihydroxy-3-keto-5-methylthiopentene (DHK-MTPene) depending upon the metal bound in the active site. Fe-containing acireductone dioxygenase (Fe-ARD) produces formate and 2-keto-4-methylthiobutyrate (KMTB), the alpha-ketoacid precursor of methionine in the methionine recycle pathway. Ni-containing acireductone dioxygenase (Ni-ARD) produces methylthiopropionate, carbon monoxide and formate, and does not lie on the methionine recycle pathway. The protein is Acireductone dioxygenase 1 of Sorghum bicolor (Sorghum).